An 89-amino-acid chain; its full sequence is Small ribosomal subunit protein uS15 (89 aa).

The protein belongs to the universal ribosomal protein uS15 family. As to quaternary structure, part of the 30S ribosomal subunit. Forms a bridge to the 50S subunit in the 70S ribosome, contacting the 23S rRNA.

In terms of biological role, one of the primary rRNA binding proteins, it binds directly to 16S rRNA where it helps nucleate assembly of the platform of the 30S subunit by binding and bridging several RNA helices of the 16S rRNA. Functionally, forms an intersubunit bridge (bridge B4) with the 23S rRNA of the 50S subunit in the ribosome. This is Small ribosomal subunit protein uS15 from Burkholderia mallei (strain NCTC 10247).